The primary structure comprises 287 residues: tRNA pseudouridine synthase B (287 aa).

Asp38 acts as the Nucleophile in catalysis.

This sequence belongs to the pseudouridine synthase TruB family. Type 1 subfamily.

It carries out the reaction uridine(55) in tRNA = pseudouridine(55) in tRNA. Functionally, responsible for synthesis of pseudouridine from uracil-55 in the psi GC loop of transfer RNAs. This Aquifex aeolicus (strain VF5) protein is tRNA pseudouridine synthase B.